The sequence spans 345 residues: Anthranilate phosphoribosyltransferase (345 aa).

5-phospho-alpha-D-ribose 1-diphosphate-binding positions include 77–79 (TAG), 82–83 (GD), T87, 89–92 (NVST), 106–114 (KHGNRAVSG), and S118. G79 is an anthranilate binding site. S91 is a binding site for Mg(2+). Residue N109 coordinates anthranilate. R164 lines the anthranilate pocket. Residues D223 and E224 each contribute to the Mg(2+) site.

It belongs to the anthranilate phosphoribosyltransferase family. In terms of assembly, homodimer. Mg(2+) serves as cofactor.

The enzyme catalyses N-(5-phospho-beta-D-ribosyl)anthranilate + diphosphate = 5-phospho-alpha-D-ribose 1-diphosphate + anthranilate. It participates in amino-acid biosynthesis; L-tryptophan biosynthesis; L-tryptophan from chorismate: step 2/5. Its function is as follows. Catalyzes the transfer of the phosphoribosyl group of 5-phosphorylribose-1-pyrophosphate (PRPP) to anthranilate to yield N-(5'-phosphoribosyl)-anthranilate (PRA). The protein is Anthranilate phosphoribosyltransferase of Saccharolobus solfataricus (strain ATCC 35092 / DSM 1617 / JCM 11322 / P2) (Sulfolobus solfataricus).